The chain runs to 298 residues: Junctional adhesion molecule B (298 aa).

An N-terminal signal peptide occupies residues 1–28 (MARSPQGLLMLLLLHYLIVALDYHKANG). Residues 29–236 (FSASKDHRQE…GKRMQVDVLN (208 aa)) lie on the Extracellular side of the membrane. Positions 32–128 (SKDHRQEVTV…GQNLQEDKVM (97 aa)) constitute an Ig-like V-type domain. Cystine bridges form between cysteine 51–cysteine 110 and cysteine 156–cysteine 214. Residue asparagine 99 is glycosylated (N-linked (GlcNAc...) asparagine). The Ig-like C2-type domain occupies 135-238 (PAVPACEVPT…RMQVDVLNIS (104 aa)). The chain crosses the membrane as a helical span at residues 237 to 257 (ISGIIATVVVVAFVISVCGLG). The Cytoplasmic segment spans residues 258–298 (TCYAQRKGYFSKETSFQKGSPASKVTTMSENDFKHTKSFII).

Belongs to the immunoglobulin superfamily. Post-translationally, the expression in Sertoli cells is regulated by TGFB3 through ubiquitin-mediated proteasomal degradation. Expressed by bone marrow stromal cells (at protein level). Expressed in skin (at protein level). Expressed in testis by Sertoli cells (at protein level). Expressed by dorsal root ganglion and spinal cord neurons.

It localises to the cell membrane. It is found in the cell junction. The protein localises to the tight junction. Junctional adhesion protein that mediates heterotypic cell-cell interactions with its cognate receptor JAM3 to regulate different cellular processes. Plays a role in homing and mobilization of hematopoietic stem and progenitor cells within the bone marrow. At the surface of bone marrow stromal cells, it contributes to the retention of the hematopoietic stem and progenitor cells expressing JAM3. Plays a central role in leukocytes extravasation by facilitating not only transmigration but also tethering and rolling of leukocytes along the endothelium. Tethering and rolling of leukocytes are dependent on the binding by JAM2 of the integrin alpha-4/beta-1. Plays a role in spermatogenesis where JAM2 and JAM3, which are respectively expressed by Sertoli and germ cells, mediate an interaction between both cell types and play an essential role in the anchorage of germ cells onto Sertoli cells and the assembly of cell polarity complexes during spermatid differentiation. Also functions as an inhibitory somatodendritic cue that prevents the myelination of non-axonal parts of neurons. During myogenesis, it is involved in myocyte fusion. May also play a role in angiogenesis. The protein is Junctional adhesion molecule B of Mus musculus (Mouse).